Reading from the N-terminus, the 110-residue chain is Large ribosomal subunit protein uL24 (110 aa).

This sequence belongs to the universal ribosomal protein uL24 family. Part of the 50S ribosomal subunit.

Its function is as follows. One of two assembly initiator proteins, it binds directly to the 5'-end of the 23S rRNA, where it nucleates assembly of the 50S subunit. Functionally, one of the proteins that surrounds the polypeptide exit tunnel on the outside of the subunit. In Chloroflexus aurantiacus (strain ATCC 29366 / DSM 635 / J-10-fl), this protein is Large ribosomal subunit protein uL24.